The chain runs to 185 residues: Pro-adrenomedullin (185 aa).

The signal sequence occupies residues 1–21 (MKLVSVALMYLGSLAFLGADT). Arginine amide is present on R41. A propeptide spanning residues 45–92 (ELRMSSSYPTGLADVKAGPAQTLIRPQDMKGASRSPEDSSPDAARIRV) is cleaved from the precursor. A disordered region spans residues 60–87 (KAGPAQTLIRPQDMKGASRSPEDSSPDA). C110 and C115 are joined by a disulfide. The interval 133 to 185 (DNVAPRSKISPQGYGRRRRRSLPEAGPGRTLVSSKPQAHGAPAPPSGSAPHFL) is disordered. Tyrosine amide is present on Y146. The propeptide at 148–185 (RRRRRSLPEAGPGRTLVSSKPQAHGAPAPPSGSAPHFL) is preproAM C-terminal fragment.

The protein belongs to the adrenomedullin family. As to expression, highest levels found in pheochromocytoma and adrenal medulla. Also found in lung, ventricle and kidney tissues.

The protein localises to the secreted. In terms of biological role, adrenomedullin/ADM and proadrenomedullin N-20 terminal peptide/PAMP are peptide hormones that act as potent hypotensive and vasodilatator agents. Numerous actions have been reported most related to the physiologic control of fluid and electrolyte homeostasis. In the kidney, ADM is diuretic and natriuretic, and both ADM and PAMP inhibit aldosterone secretion by direct adrenal actions. In pituitary gland, both peptides at physiologically relevant doses inhibit basal ACTH secretion. Both peptides appear to act in brain and pituitary gland to facilitate the loss of plasma volume, actions which complement their hypotensive effects in blood vessels. Its function is as follows. ADM function is mediated by the CALCRL-RAMP2 and CALCRL-RAMP3 receptor complexes with ADM showing the highest potency for the CALCRL-RAMP2 complex. The chain is Pro-adrenomedullin from Homo sapiens (Human).